The sequence spans 716 residues: 1,4-alpha-glucan branching enzyme GlgB (716 aa).

The active-site Nucleophile is Asp-398. Glu-451 functions as the Proton donor in the catalytic mechanism.

The protein belongs to the glycosyl hydrolase 13 family. GlgB subfamily. Monomer.

It catalyses the reaction Transfers a segment of a (1-&gt;4)-alpha-D-glucan chain to a primary hydroxy group in a similar glucan chain.. It functions in the pathway glycan biosynthesis; glycogen biosynthesis. Functionally, catalyzes the formation of the alpha-1,6-glucosidic linkages in glycogen by scission of a 1,4-alpha-linked oligosaccharide from growing alpha-1,4-glucan chains and the subsequent attachment of the oligosaccharide to the alpha-1,6 position. The protein is 1,4-alpha-glucan branching enzyme GlgB of Nitrobacter winogradskyi (strain ATCC 25391 / DSM 10237 / CIP 104748 / NCIMB 11846 / Nb-255).